We begin with the raw amino-acid sequence, 155 residues long: Protein-export protein SecB (155 aa).

It belongs to the SecB family. As to quaternary structure, homotetramer, a dimer of dimers. One homotetramer interacts with 1 SecA dimer.

The protein resides in the cytoplasm. One of the proteins required for the normal export of preproteins out of the cell cytoplasm. It is a molecular chaperone that binds to a subset of precursor proteins, maintaining them in a translocation-competent state. It also specifically binds to its receptor SecA. The sequence is that of Protein-export protein SecB from Vibrio atlanticus (strain LGP32) (Vibrio splendidus (strain Mel32)).